The primary structure comprises 154 residues: 6,7-dimethyl-8-ribityllumazine synthase (154 aa).

5-amino-6-(D-ribitylamino)uracil contacts are provided by residues F22, 56–58 (SFE), and 81–83 (VLI). (2S)-2-hydroxy-3-oxobutyl phosphate is bound at residue 86 to 87 (ET). The active-site Proton donor is the H89. F114 lines the 5-amino-6-(D-ribitylamino)uracil pocket. R128 contributes to the (2S)-2-hydroxy-3-oxobutyl phosphate binding site.

It belongs to the DMRL synthase family.

The enzyme catalyses (2S)-2-hydroxy-3-oxobutyl phosphate + 5-amino-6-(D-ribitylamino)uracil = 6,7-dimethyl-8-(1-D-ribityl)lumazine + phosphate + 2 H2O + H(+). Its pathway is cofactor biosynthesis; riboflavin biosynthesis; riboflavin from 2-hydroxy-3-oxobutyl phosphate and 5-amino-6-(D-ribitylamino)uracil: step 1/2. Catalyzes the formation of 6,7-dimethyl-8-ribityllumazine by condensation of 5-amino-6-(D-ribitylamino)uracil with 3,4-dihydroxy-2-butanone 4-phosphate. This is the penultimate step in the biosynthesis of riboflavin. The polypeptide is 6,7-dimethyl-8-ribityllumazine synthase (Chlamydia caviae (strain ATCC VR-813 / DSM 19441 / 03DC25 / GPIC) (Chlamydophila caviae)).